A 487-amino-acid chain; its full sequence is Dihydrofolate synthase/folylpolyglutamate synthase (487 aa).

44 to 46 is a binding site for 7,8-dihydropteroate; it reads DPS. Residue 74-77 participates in ATP binding; sequence GKTS. Residues T76 and S98 each coordinate Mg(2+). 150 to 153 contributes to the 7,8-dihydropteroate binding site; the sequence is SKFE. E174 serves as a coordination point for Mg(2+). 181–183 is a 7,8-dihydropteroate binding site; it reads WDA. The Mg(2+) site is built by H201 and D203. Residues N301, R338, and 351–354 contribute to the ATP site; that span reads DAAH. D384 is a binding site for Mg(2+).

Belongs to the folylpolyglutamate synthase family. As to quaternary structure, monomer. Requires Mg(2+) as cofactor.

The enzyme catalyses 7,8-dihydropteroate + L-glutamate + ATP = 7,8-dihydrofolate + ADP + phosphate + H(+). The catalysed reaction is (6S)-5,6,7,8-tetrahydrofolyl-(gamma-L-Glu)(n) + L-glutamate + ATP = (6S)-5,6,7,8-tetrahydrofolyl-(gamma-L-Glu)(n+1) + ADP + phosphate + H(+). It functions in the pathway cofactor biosynthesis; tetrahydrofolate biosynthesis; 7,8-dihydrofolate from 2-amino-4-hydroxy-6-hydroxymethyl-7,8-dihydropteridine diphosphate and 4-aminobenzoate: step 2/2. The protein operates within cofactor biosynthesis; tetrahydrofolylpolyglutamate biosynthesis. Functionally, catalyzes the addition of a glutamate residue to dihydropteroate (7,8-dihydropteroate or H2Pte) to form dihydrofolate (7,8-dihydrofolate monoglutamate or H2Pte-Glu). Also catalyzes successive additions of L-glutamate to tetrahydrofolate, leading to folylpolyglutamate derivatives. Is involved in the bioactivation of the antituberculous drug para-aminosalicylic acid (PAS). Is able to use hydroxy-dihydropteroate (H2PtePAS) as substrate, which is the product formed by the action of DHPS (FolP1) on PAS, leading to hydroxy-dihydrofolate (H2PtePAS-Glu). This compound inhibits dihydrofolate reductase DHFR (DfrA), the next enzyme in the folate pathway, and thus disrupts the folate-dependent metabolic pathways. The chain is Dihydrofolate synthase/folylpolyglutamate synthase from Mycobacterium tuberculosis (strain ATCC 25618 / H37Rv).